Here is a 291-residue protein sequence, read N- to C-terminus: Glucose and ribitol dehydrogenase (291 aa).

The segment at 1–35 (MASGGQFPPQKQESQPGKEHLMDPSPQHASPHYKP) is disordered. 45–69 (LVTGGDSGIGRSVCYHFALEGATVA) provides a ligand contact to NAD(+). Ser183 is a binding site for substrate. The Proton acceptor role is filled by Tyr196.

This sequence belongs to the short-chain dehydrogenases/reductases (SDR) family. In terms of tissue distribution, expressed in embryogenic cells, somatic embryos and seeds in the later stages of development, but not in non-embryogenic cells and mature leaves.

In terms of biological role, may act as a short alcohol-polyol-sugar dehydrogenase possibly related to carbohydrate metabolism and the acquisition of desiccation tolerance. May also be involved in signal transduction. In Daucus carota (Wild carrot), this protein is Glucose and ribitol dehydrogenase (CAISE5).